An 804-amino-acid polypeptide reads, in one-letter code: Leucine--tRNA ligase (804 aa).

The 'HIGH' region signature appears at P40–H51. The 'KMSKS' region motif lies at K574–S578. ATP is bound at residue K577.

It belongs to the class-I aminoacyl-tRNA synthetase family.

It localises to the cytoplasm. It catalyses the reaction tRNA(Leu) + L-leucine + ATP = L-leucyl-tRNA(Leu) + AMP + diphosphate. The polypeptide is Leucine--tRNA ligase (Shouchella clausii (strain KSM-K16) (Alkalihalobacillus clausii)).